Reading from the N-terminus, the 234-residue chain is Glucosamine-6-phosphate deaminase (234 aa).

Asp-63 acts as the Proton acceptor; for enolization step in catalysis. Asn-129 functions as the For ring-opening step in the catalytic mechanism. His-131 serves as the catalytic Proton acceptor; for ring-opening step. Glu-136 serves as the catalytic For ring-opening step.

This sequence belongs to the glucosamine/galactosamine-6-phosphate isomerase family. NagB subfamily.

It catalyses the reaction alpha-D-glucosamine 6-phosphate + H2O = beta-D-fructose 6-phosphate + NH4(+). It participates in amino-sugar metabolism; N-acetylneuraminate degradation; D-fructose 6-phosphate from N-acetylneuraminate: step 5/5. Functionally, catalyzes the reversible isomerization-deamination of glucosamine 6-phosphate (GlcN6P) to form fructose 6-phosphate (Fru6P) and ammonium ion. The polypeptide is Glucosamine-6-phosphate deaminase (Listeria monocytogenes serotype 4b (strain CLIP80459)).